Consider the following 194-residue polypeptide: Imidazoleglycerol-phosphate dehydratase (194 aa).

It belongs to the imidazoleglycerol-phosphate dehydratase family.

The protein localises to the cytoplasm. It catalyses the reaction D-erythro-1-(imidazol-4-yl)glycerol 3-phosphate = 3-(imidazol-4-yl)-2-oxopropyl phosphate + H2O. It participates in amino-acid biosynthesis; L-histidine biosynthesis; L-histidine from 5-phospho-alpha-D-ribose 1-diphosphate: step 6/9. The chain is Imidazoleglycerol-phosphate dehydratase from Oceanobacillus iheyensis (strain DSM 14371 / CIP 107618 / JCM 11309 / KCTC 3954 / HTE831).